Consider the following 129-residue polypeptide: Transcription antitermination protein NusB (129 aa).

It belongs to the NusB family.

Involved in transcription antitermination. Required for transcription of ribosomal RNA (rRNA) genes. Binds specifically to the boxA antiterminator sequence of the ribosomal RNA (rrn) operons. The sequence is that of Transcription antitermination protein NusB from Staphylococcus aureus (strain MRSA252).